Reading from the N-terminus, the 128-residue chain is Small ribosomal subunit protein uS13 (128 aa).

Residues Val-98 to Ser-128 are disordered. The segment covering Gln-101–Ser-128 has biased composition (basic residues).

It belongs to the universal ribosomal protein uS13 family. In terms of assembly, part of the 30S ribosomal subunit. Forms a loose heterodimer with protein S19. Forms two bridges to the 50S subunit in the 70S ribosome.

Its function is as follows. Located at the top of the head of the 30S subunit, it contacts several helices of the 16S rRNA. In the 70S ribosome it contacts the 23S rRNA (bridge B1a) and protein L5 of the 50S subunit (bridge B1b), connecting the 2 subunits; these bridges are implicated in subunit movement. Contacts the tRNAs in the A and P-sites. The sequence is that of Small ribosomal subunit protein uS13 from Thermomicrobium roseum (strain ATCC 27502 / DSM 5159 / P-2).